A 189-amino-acid polypeptide reads, in one-letter code: Elongation factor P (189 aa).

An N6-(3,6-diaminohexanoyl)-5-hydroxylysine modification is found at lysine 34.

It belongs to the elongation factor P family. May be beta-lysylated on the epsilon-amino group of Lys-34 by the combined action of EpmA and EpmB, and then hydroxylated on the C5 position of the same residue by EpmC (if this protein is present). Lysylation is critical for the stimulatory effect of EF-P on peptide-bond formation. The lysylation moiety may extend toward the peptidyltransferase center and stabilize the terminal 3-CCA end of the tRNA. Hydroxylation of the C5 position on Lys-34 may allow additional potential stabilizing hydrogen-bond interactions with the P-tRNA.

The protein resides in the cytoplasm. Its pathway is protein biosynthesis; polypeptide chain elongation. Its function is as follows. Involved in peptide bond synthesis. Alleviates ribosome stalling that occurs when 3 or more consecutive Pro residues or the sequence PPG is present in a protein, possibly by augmenting the peptidyl transferase activity of the ribosome. Modification of Lys-34 is required for alleviation. The sequence is that of Elongation factor P from Legionella pneumophila (strain Lens).